Here is a 328-residue protein sequence, read N- to C-terminus: Tryptophan--tRNA ligase (328 aa).

ATP-binding positions include 10–12 (QAT) and 18–19 (GN). Residues 11–19 (ATGSLHLGN) carry the 'HIGH' region motif. Residue Asp134 participates in L-tryptophan binding. ATP contacts are provided by residues 146–148 (GED), Ile186, and 195–199 (KMSKS). Positions 195 to 199 (KMSKS) match the 'KMSKS' region motif.

Belongs to the class-I aminoacyl-tRNA synthetase family. In terms of assembly, homodimer.

Its subcellular location is the cytoplasm. It catalyses the reaction tRNA(Trp) + L-tryptophan + ATP = L-tryptophyl-tRNA(Trp) + AMP + diphosphate + H(+). In terms of biological role, catalyzes the attachment of tryptophan to tRNA(Trp). This Rickettsia bellii (strain RML369-C) protein is Tryptophan--tRNA ligase.